Here is a 323-residue protein sequence, read N- to C-terminus: uncharacterized protein (323 aa).

Helical transmembrane passes span 8–28 (FLVI…MFME), 32–52 (LTLL…PFSL), and 92–112 (ITIF…CGIF).

It localises to the mitochondrion membrane. This is an uncharacterized protein from Neurospora crassa (strain ATCC 24698 / 74-OR23-1A / CBS 708.71 / DSM 1257 / FGSC 987).